Consider the following 83-residue polypeptide: Large ribosomal subunit protein bL31B (83 aa).

It belongs to the bacterial ribosomal protein bL31 family. Type B subfamily. Part of the 50S ribosomal subunit.

The protein is Large ribosomal subunit protein bL31B of Lacticaseibacillus casei (strain BL23) (Lactobacillus casei).